Here is a 204-residue protein sequence, read N- to C-terminus: Hydrophilin YNL190W (204 aa).

Positions 1–20 (MKFSSVTAITLATVATVATA) are cleaved as a signal peptide. A compositionally biased stretch (low complexity) spans 35–46 (SDGSLTTTTSTH). Positions 35 to 179 (SDGSLTTTTS…ARKNNAAPGP (145 aa)) are disordered. Residues 47–59 (TTHKYGKFNKTSK) are compositionally biased toward basic residues. N-linked (GlcNAc...) asparagine glycosylation is found at Asn55, Asn64, Asn75, Asn84, Asn95, Asn104, Asn115, Asn124, Asn135, Asn144, and Asn155. Residues 67–79 (GTHKYGKFNKTSK) show a composition bias toward basic residues. Over residues 87–99 (GTHKYGKFNKTSK) the composition is skewed to basic residues. A compositionally biased stretch (basic residues) spans 107-119 (GTHKYGKFNKTSK). Positions 127–139 (GTHKYGKFNKTSK) are enriched in basic residues. A compositionally biased stretch (basic residues) spans 147 to 156 (GTHKYGKFNK). Asn174 carries GPI-anchor amidated asparagine lipidation. The propeptide at 175–204 (AAPGPSNFNSIKLFGVTAGSAAVAGALLLL) is removed in mature form.

Belongs to the PGA14 family. In terms of processing, the GPI-anchor is attached to the protein in the endoplasmic reticulum and serves to target the protein to the cell surface. There, the glucosamine-inositol phospholipid moiety is cleaved off and the GPI-modified mannoprotein is covalently attached via its lipidless GPI glycan remnant to the 1,6-beta-glucan of the outer cell wall layer.

Its subcellular location is the secreted. The protein resides in the cell wall. The protein localises to the membrane. Functionally, hydrophilin which is essential to overcome the simple stress of the desiccation-rehydration process. This is Hydrophilin YNL190W from Saccharomyces cerevisiae (strain ATCC 204508 / S288c) (Baker's yeast).